The sequence spans 340 residues: GTP 3',8-cyclase (340 aa).

Residues 8-227 (KLGRPIRDLR…EMIEQNFDIE (220 aa)) enclose the Radical SAM core domain. R17 contributes to the GTP binding site. Positions 24 and 28 each coordinate [4Fe-4S] cluster. Y30 serves as a coordination point for S-adenosyl-L-methionine. Position 31 (C31) interacts with [4Fe-4S] cluster. R71 contacts GTP. S-adenosyl-L-methionine is bound at residue G75. A GTP-binding site is contributed by T102. S126 contacts S-adenosyl-L-methionine. Residue K163 coordinates GTP. M197 provides a ligand contact to S-adenosyl-L-methionine. Residues C261 and C264 each contribute to the [4Fe-4S] cluster site. 266 to 268 (RAR) lines the GTP pocket. Residue C278 coordinates [4Fe-4S] cluster.

It belongs to the radical SAM superfamily. MoaA family. As to quaternary structure, monomer and homodimer. It depends on [4Fe-4S] cluster as a cofactor.

The catalysed reaction is GTP + AH2 + S-adenosyl-L-methionine = (8S)-3',8-cyclo-7,8-dihydroguanosine 5'-triphosphate + 5'-deoxyadenosine + L-methionine + A + H(+). The protein operates within cofactor biosynthesis; molybdopterin biosynthesis. In terms of biological role, catalyzes the cyclization of GTP to (8S)-3',8-cyclo-7,8-dihydroguanosine 5'-triphosphate. The chain is GTP 3',8-cyclase from Staphylococcus saprophyticus subsp. saprophyticus (strain ATCC 15305 / DSM 20229 / NCIMB 8711 / NCTC 7292 / S-41).